We begin with the raw amino-acid sequence, 505 residues long: Geissoschizine oxidase (505 aa).

Residues 9 to 29 (FSSPAFFLLLPFLFLLIKPLI) traverse the membrane as a helical segment. Cys443 is a heme binding site.

It belongs to the cytochrome P450 family. Heme is required as a cofactor. Mainly expressed in roots.

Its subcellular location is the membrane. It catalyses the reaction (19E)-geissoschizine + reduced [NADPH--hemoprotein reductase] + O2 = akuammicine + formate + oxidized [NADPH--hemoprotein reductase] + H2O + H(+). The catalysed reaction is (19E)-geissoschizine + reduced [NADPH--hemoprotein reductase] + O2 = 3,17-didehydrostemmadenine + oxidized [NADPH--hemoprotein reductase] + 2 H2O. The enzyme catalyses 3,17-didehydrostemmadenine = 17-dehydropreakuammicine. Its pathway is alkaloid biosynthesis. Functionally, monooxygenase involved in the biosynthesis of curare monoterpene indole alkaloids (MIAs), natural products such as strychnine, a neurotoxic compound used as a pesticide to control rodents, and its pharmacologically active derivatives, including brucine, used to regulate blood pressure. Curare alkaloids act as animal glycine receptor antagonists. Catalyzes the conversion of geissoschizine to dehydropreakuammicine by cyclization, which is spontaneously converted into akuammicine by aromatization. The polypeptide is Geissoschizine oxidase (Strychnos nux-vomica (Poison nut)).